The primary structure comprises 436 residues: MSMVVQHVEEKAVHSWSRISTAGKKALEEALLVFNPMSQDLSATEAQLVAFLQGLRDDGFQPTILRSGDVYGYSSCTASPPSQTKLQARTINPPATSLPARAPQTAKSVPTGQTTLLPVPLSGRLAKGSTPALAKHTTTNLLLSSLKQSNASNTSGTTVGFPAHLYPGVYPAMQLSVVLEALVPLKTPCLDVKHRAQSLQLSLAKSSLKLRKGSGNPQSKAPRRITSKGLKYLTSKGPGAGLRRGAGTQSNGARMKGRSTLGTKTVRGKAPRTLTKAVCARASVAPAKTKTVRVRAKVKQAKPKAAKAKAKAAALRGKAKDKAVQAKAKAARTKHKKRPKGYVQTRTGRTSLKNSSETVGQKRKKAEETKGLPPKKRARCVPRSKARLGTGTAKPQKSQTIKVDRKCSDDEVRQCAQQILRVNLSPVVLLQPLLPV.

The interval 95-119 is disordered; the sequence is ATSLPARAPQTAKSVPTGQTTLLPV. Over residues 105–116 the composition is skewed to polar residues; that stretch reads TAKSVPTGQTTL. Serine 129 carries the phosphoserine modification. Disordered regions lie at residues 210 to 258 and 314 to 405; these read LRKG…MKGR and ALRG…KVDR. Residues 264–334 are a coiled coil; the sequence is KTVRGKAPRT…QAKAKAARTK (71 aa). A compositionally biased stretch (basic residues) spans 329-340; the sequence is KAARTKHKKRPK. Residues 344–359 are compositionally biased toward polar residues; it reads QTRTGRTSLKNSSETV. Positions 373–386 are enriched in basic residues; it reads PPKKRARCVPRSKA.

This chain is Coiled-coil domain-containing protein 71 (Ccdc71), found in Rattus norvegicus (Rat).